Consider the following 945-residue polypeptide: Valine--tRNA ligase (945 aa).

The 'HIGH' region signature appears at 42 to 52; the sequence is PNVTGTLHMGH. A 'KMSKS' region motif is present at residues 552-556; the sequence is KMSKS. Lys555 is an ATP binding site. The stretch at 879-945 forms a coiled coil; the sequence is DKATETARLS…VQTQLSKLKD (67 aa).

Belongs to the class-I aminoacyl-tRNA synthetase family. ValS type 1 subfamily. In terms of assembly, monomer.

Its subcellular location is the cytoplasm. It carries out the reaction tRNA(Val) + L-valine + ATP = L-valyl-tRNA(Val) + AMP + diphosphate. Its function is as follows. Catalyzes the attachment of valine to tRNA(Val). As ValRS can inadvertently accommodate and process structurally similar amino acids such as threonine, to avoid such errors, it has a 'posttransfer' editing activity that hydrolyzes mischarged Thr-tRNA(Val) in a tRNA-dependent manner. This Neisseria meningitidis serogroup A / serotype 4A (strain DSM 15465 / Z2491) protein is Valine--tRNA ligase.